The primary structure comprises 479 residues: Oxysterol-binding protein homolog C23B6.01c (479 aa).

Ser-328, Ser-408, Ser-409, and Ser-421 each carry phosphoserine. Residues Lys-404 to Ser-418 show a composition bias toward basic and acidic residues. The tract at residues Lys-404 to Leu-479 is disordered. Polar residues predominate over residues Gln-439–Gly-452. The span at Lys-470–Leu-479 shows a compositional bias: basic and acidic residues.

Belongs to the OSBP family.

It is found in the cytoplasm. The protein localises to the nucleus. This is Oxysterol-binding protein homolog C23B6.01c from Schizosaccharomyces pombe (strain 972 / ATCC 24843) (Fission yeast).